Consider the following 476-residue polypeptide: Arginine biosynthesis bifunctional protein ArgJ, mitochondrial (476 aa).

Positions 193, 219, 237, 337, 471, and 476 each coordinate substrate. Thr-237 serves as the catalytic Nucleophile.

This sequence belongs to the ArgJ family. In terms of assembly, heterodimer of an alpha and a beta chain. The alpha and beta chains are autoproteolytically processed from a single precursor protein within the mitochondrion.

It localises to the mitochondrion matrix. The enzyme catalyses N(2)-acetyl-L-ornithine + L-glutamate = N-acetyl-L-glutamate + L-ornithine. The catalysed reaction is L-glutamate + acetyl-CoA = N-acetyl-L-glutamate + CoA + H(+). It functions in the pathway amino-acid biosynthesis; L-arginine biosynthesis; L-ornithine and N-acetyl-L-glutamate from L-glutamate and N(2)-acetyl-L-ornithine (cyclic): step 1/1. The protein operates within amino-acid biosynthesis; L-arginine biosynthesis; N(2)-acetyl-L-ornithine from L-glutamate: step 1/4. Its function is as follows. Catalyzes two activities which are involved in the cyclic version of arginine biosynthesis: the synthesis of acetylglutamate from glutamate and acetyl-CoA, and of ornithine by transacetylation between acetylornithine and glutamate. In Cryptococcus neoformans var. neoformans serotype D (strain B-3501A) (Filobasidiella neoformans), this protein is Arginine biosynthesis bifunctional protein ArgJ, mitochondrial.